Here is a 231-residue protein sequence, read N- to C-terminus: Phosphatidylserine decarboxylase proenzyme (231 aa).

The active-site Schiff-base intermediate with substrate; via pyruvic acid is the Ser-188. The residue at position 188 (Ser-188) is a Pyruvic acid (Ser); by autocatalysis.

The protein belongs to the phosphatidylserine decarboxylase family. PSD-A subfamily. In terms of assembly, heterodimer of a large membrane-associated beta subunit and a small pyruvoyl-containing alpha subunit. Pyruvate is required as a cofactor. In terms of processing, is synthesized initially as an inactive proenzyme. Formation of the active enzyme involves a self-maturation process in which the active site pyruvoyl group is generated from an internal serine residue via an autocatalytic post-translational modification. Two non-identical subunits are generated from the proenzyme in this reaction, and the pyruvate is formed at the N-terminus of the alpha chain, which is derived from the carboxyl end of the proenzyme. The post-translation cleavage follows an unusual pathway, termed non-hydrolytic serinolysis, in which the side chain hydroxyl group of the serine supplies its oxygen atom to form the C-terminus of the beta chain, while the remainder of the serine residue undergoes an oxidative deamination to produce ammonia and the pyruvoyl prosthetic group on the alpha chain.

Its subcellular location is the cell membrane. The enzyme catalyses a 1,2-diacyl-sn-glycero-3-phospho-L-serine + H(+) = a 1,2-diacyl-sn-glycero-3-phosphoethanolamine + CO2. It participates in phospholipid metabolism; phosphatidylethanolamine biosynthesis; phosphatidylethanolamine from CDP-diacylglycerol: step 2/2. Catalyzes the formation of phosphatidylethanolamine (PtdEtn) from phosphatidylserine (PtdSer). The protein is Phosphatidylserine decarboxylase proenzyme of Rickettsia felis (strain ATCC VR-1525 / URRWXCal2) (Rickettsia azadi).